A 200-amino-acid chain; its full sequence is Max dimerization protein 3 (200 aa).

Disordered stretches follow at residues 26–56 (EHGYASILPCDPATPGRRKRQRTNSNPDNVR) and 134–164 (LLPPNTERIRTDSLDSSTLSSERSDSDQEDL). The region spanning 54-106 (NVRSVHNELEKHRRAQLRRCLEQLKQQVPLSMENSRHTTLSLLHRAKQHIKKL) is the bHLH domain.

As to quaternary structure, efficient DNA binding requires dimerization with another bHLH protein. Binds DNA as a heterodimer with MAX.

Its subcellular location is the nucleus. Its function is as follows. Transcriptional repressor. Binds with MAX to form a sequence-specific DNA-binding protein complex which recognizes the core sequence 5'-CAC[GA]TG-3'. The chain is Max dimerization protein 3 (mxd3) from Xenopus tropicalis (Western clawed frog).